The sequence spans 1227 residues: Protein U7 (1227 aa).

This sequence belongs to the herpesviridae US22 family.

This Homo sapiens (Human) protein is Protein U7 (U7/U5).